The following is a 56-amino-acid chain: Large ribosomal subunit protein bL32 (56 aa).

The protein belongs to the bacterial ribosomal protein bL32 family.

The sequence is that of Large ribosomal subunit protein bL32 from Prochlorococcus marinus (strain MIT 9215).